We begin with the raw amino-acid sequence, 246 residues long: Exosome complex component Rrp41 (246 aa).

Belongs to the RNase PH family. Rrp41 subfamily. Component of the archaeal exosome complex. Forms a hexameric ring-like arrangement composed of 3 Rrp41-Rrp42 heterodimers. The hexameric ring associates with a trimer of Rrp4 and/or Csl4 subunits.

Its subcellular location is the cytoplasm. Its function is as follows. Catalytic component of the exosome, which is a complex involved in RNA degradation. Has 3'-&gt;5' exoribonuclease activity. Can also synthesize heteromeric RNA-tails. The protein is Exosome complex component Rrp41 of Aeropyrum pernix (strain ATCC 700893 / DSM 11879 / JCM 9820 / NBRC 100138 / K1).